Consider the following 834-residue polypeptide: Periplasmic nitrate reductase (834 aa).

Residues 1–29 (MSLTRRQFAKANAAAIAATVAGMPIASTA) constitute a signal peptide (tat-type signal). The region spanning 41-97 (LKWDKAPCRFCGTGCGVMVATRENRVVATHGDVKADVNRGINCVKGYFLSKIMYGTD) is the 4Fe-4S Mo/W bis-MGD-type domain. Cys-48, Cys-51, Cys-55, and Cys-83 together coordinate [4Fe-4S] cluster. Mo-bis(molybdopterin guanine dinucleotide) contacts are provided by residues Lys-85, Gln-152, Asn-177, Cys-181, 214 to 221 (WGSNMAEM), 245 to 249 (STFEH), 264 to 266 (QTD), Met-375, Gln-379, Asn-485, 511 to 512 (SD), Lys-534, Asp-561, and 721 to 730 (TGRVLEHWHT). Substrate is bound at residue Phe-797. Residues Asn-805 and Lys-822 each coordinate Mo-bis(molybdopterin guanine dinucleotide).

This sequence belongs to the prokaryotic molybdopterin-containing oxidoreductase family. NasA/NapA/NarB subfamily. Component of the periplasmic nitrate reductase NapAB complex composed of NapA and NapB. [4Fe-4S] cluster is required as a cofactor. Requires Mo-bis(molybdopterin guanine dinucleotide) as cofactor. In terms of processing, predicted to be exported by the Tat system. The position of the signal peptide cleavage has not been experimentally proven.

Its subcellular location is the periplasm. The enzyme catalyses 2 Fe(II)-[cytochrome] + nitrate + 2 H(+) = 2 Fe(III)-[cytochrome] + nitrite + H2O. Functionally, catalytic subunit of the periplasmic nitrate reductase complex NapAB. Receives electrons from NapB and catalyzes the reduction of nitrate to nitrite. This chain is Periplasmic nitrate reductase, found in Stutzerimonas stutzeri (Pseudomonas stutzeri).